We begin with the raw amino-acid sequence, 1264 residues long: Valine--tRNA ligase (1264 aa).

Ser-2 carries the N-acetylserine modification. Residues 89–219 enclose the GST C-terminal domain; it reads GSRAAVLVQQ…YSGARPLSHQ (131 aa). Residues 217–296 form a disordered region; sequence SHQPGPEAPA…GEKKDVSGPM (80 aa). Composition is skewed to basic and acidic residues over residues 234–248 and 261–275; these read LKKE…EKFQ and GEKK…KRDP. The 'HIGH' region motif lies at 344–354; that stretch reads PNVTGSLHLGH. 2 positions are modified to phosphoserine: Ser-437 and Ser-527. The residue at position 645 (Lys-645) is an N6-acetyllysine. Positions 862–866 match the 'KMSKS' region motif; sequence KMSKS. Lys-865 serves as a coordination point for ATP.

It belongs to the class-I aminoacyl-tRNA synthetase family. In terms of assembly, forms high-molecular-mass aggregates with elongation factor 1.

It carries out the reaction tRNA(Val) + L-valine + ATP = L-valyl-tRNA(Val) + AMP + diphosphate. Can be regulated by protein kinase C-dependent phosphorylation. In terms of biological role, catalyzes the attachment of valine to tRNA(Val). In Homo sapiens (Human), this protein is Valine--tRNA ligase.